The chain runs to 4513 residues: Dynein-1-beta heavy chain, flagellar inner arm I1 complex (4513 aa).

A stem region spans residues 1 to 1806 (MEPGDEGKGH…IVKQVLSVFY (1806 aa)). Coiled coils occupy residues 192 to 223 (KAAAKQKDLVQRLESTIIHWTRQVKELLNQQD), 1544 to 1577 (TAQGLLESFQDMNNKLERIQKSLDNYLENKRQQF), and 1704 to 1727 (THECEKALADADSARKNLKLLKKK). 4 AAA regions span residues 1807-2028 (YGYE…PIAR), 2089-2350 (RAIE…VPEN), 2458-2706 (FKPA…IIQG), and 2808-3059 (DYAL…LKRR). ATP is bound by residues 1845-1852 (GPAGTGKT), 2127-2134 (GRTGSGKS), 2497-2504 (GNVGVGKT), and 2848-2855 (GVGGSGRK). Coiled coils occupy residues 3107 to 3193 (AAMK…LTKK), 3301 to 3384 (KRAK…SISE), and 3499 to 3519 (RLKVLNLQMSDMARQIENAIQ). Positions 3107-3384 (AAMKKVAEEK…RVRWEASISE (278 aa)) are stalk. 2 AAA regions span residues 3443 to 3674 (LANP…EVNA) and 3890 to 4109 (ATTY…LLKS).

The I1 inner arm complex (also known as the f dynein complex) is a two-headed isoform composed of two heavy chains (1-alpha and 1-beta), three intermediate chains and three light chains. I1 occupies a specific position proximal to the first radial spoke and repeats every 96 nm along the length of the axoneme.

It localises to the cell projection. The protein localises to the cilium. The protein resides in the flagellum. It is found in the cytoplasm. Its subcellular location is the cytoskeleton. It localises to the flagellum axoneme. Force generating protein of eukaryotic cilia and flagella. Produces force towards the minus ends of microtubules. Dynein has ATPase activity; the force-producing power stroke is thought to occur on release of ADP. Required for assembly of the I1 inner arm complex and its targeting to the appropriate axoneme location. Also required for phototaxis. In Chlamydomonas reinhardtii (Chlamydomonas smithii), this protein is Dynein-1-beta heavy chain, flagellar inner arm I1 complex (DHC10).